The following is a 346-amino-acid chain: Phosphoribosylformylglycinamidine cyclo-ligase (346 aa).

Belongs to the AIR synthase family.

It is found in the cytoplasm. The catalysed reaction is 2-formamido-N(1)-(5-O-phospho-beta-D-ribosyl)acetamidine + ATP = 5-amino-1-(5-phospho-beta-D-ribosyl)imidazole + ADP + phosphate + H(+). Its pathway is purine metabolism; IMP biosynthesis via de novo pathway; 5-amino-1-(5-phospho-D-ribosyl)imidazole from N(2)-formyl-N(1)-(5-phospho-D-ribosyl)glycinamide: step 2/2. This is Phosphoribosylformylglycinamidine cyclo-ligase from Polaromonas sp. (strain JS666 / ATCC BAA-500).